The sequence spans 492 residues: MDPYKYRPSSAYNTPFCTTNSGAPIWNNTAVMSVGERGPILLEDYQLIEKIATFTRERIPERVVHARGASAKGFFEVTHDVSDLSCADFLRAPGVQTPVIVRFSTVIHERVSPETVRDPRGFAVKFYTREGNFDLVGNNFPVFFVRDAMQFPDVIRAFKPNPKSHLQESWRFLDFCSYHPESLLSFAWFYDDVGIPINYRHMEGFGVQAYSLINKAGKARLVKFHWKPTCGVKSMLEEEAIRVGGSNHSHATQDLYESIAAGNFPEWRLYIQTIDYEDQNNYDFEPLDTTIAWPEDVVPLRPVGRLVLNKNIDNFFAENEMLAFSMSLVPGIHYSDDKMLQARSFAYADTQRHRLGPNYLQLPVNAPKCPHHNNHHEGFMNFMHRDEEVNYFPSRYDACRHAEKYPMPPNVLSGKRERCVIPKENHNFKQAGDRYRSWAPDRQERFVNRFVEALSDSKVTHEVRNIWISYWTQADRSLGQKIASRMNARPNM.

Residues histidine 65 and asparagine 138 contribute to the active site. Position 347 (tyrosine 347) interacts with heme.

This sequence belongs to the catalase family. Homotetramer. Requires heme as cofactor. In terms of tissue distribution, high levels in green cotyledons, mature leaf, stem and green hypocotyl.

It localises to the peroxisome. The enzyme catalyses 2 H2O2 = O2 + 2 H2O. Occurs in almost all aerobically respiring organisms and serves to protect cells from the toxic effects of hydrogen peroxide. The protein is Catalase isozyme 2 (CAT2) of Cucurbita pepo (Vegetable marrow).